The primary structure comprises 313 residues: Porphobilinogen deaminase (313 aa).

C242 carries the post-translational modification S-(dipyrrolylmethanemethyl)cysteine.

This sequence belongs to the HMBS family. Monomer. It depends on dipyrromethane as a cofactor.

It carries out the reaction 4 porphobilinogen + H2O = hydroxymethylbilane + 4 NH4(+). It functions in the pathway porphyrin-containing compound metabolism; protoporphyrin-IX biosynthesis; coproporphyrinogen-III from 5-aminolevulinate: step 2/4. Functionally, tetrapolymerization of the monopyrrole PBG into the hydroxymethylbilane pre-uroporphyrinogen in several discrete steps. The protein is Porphobilinogen deaminase of Pseudomonas paraeruginosa (strain DSM 24068 / PA7) (Pseudomonas aeruginosa (strain PA7)).